Reading from the N-terminus, the 259-residue chain is 5'-nucleotidase SurE (259 aa).

Residues aspartate 11, aspartate 12, serine 42, and asparagine 99 each coordinate a divalent metal cation.

It belongs to the SurE nucleotidase family. The cofactor is a divalent metal cation.

The protein resides in the cytoplasm. It catalyses the reaction a ribonucleoside 5'-phosphate + H2O = a ribonucleoside + phosphate. Its function is as follows. Nucleotidase that shows phosphatase activity on nucleoside 5'-monophosphates. This is 5'-nucleotidase SurE from Cytophaga hutchinsonii (strain ATCC 33406 / DSM 1761 / CIP 103989 / NBRC 15051 / NCIMB 9469 / D465).